Here is a 282-residue protein sequence, read N- to C-terminus: ATP synthase gamma chain (282 aa).

The protein belongs to the ATPase gamma chain family. F-type ATPases have 2 components, CF(1) - the catalytic core - and CF(0) - the membrane proton channel. CF(1) has five subunits: alpha(3), beta(3), gamma(1), delta(1), epsilon(1). CF(0) has three main subunits: a, b and c.

Its subcellular location is the cell membrane. Its function is as follows. Produces ATP from ADP in the presence of a proton gradient across the membrane. The gamma chain is believed to be important in regulating ATPase activity and the flow of protons through the CF(0) complex. The chain is ATP synthase gamma chain from Clostridium botulinum (strain 657 / Type Ba4).